The chain runs to 216 residues: NADH-quinone oxidoreductase subunit C (216 aa).

The protein belongs to the complex I 30 kDa subunit family. As to quaternary structure, NDH-1 is composed of 14 different subunits. Subunits NuoB, C, D, E, F, and G constitute the peripheral sector of the complex.

Its subcellular location is the cell inner membrane. The enzyme catalyses a quinone + NADH + 5 H(+)(in) = a quinol + NAD(+) + 4 H(+)(out). In terms of biological role, NDH-1 shuttles electrons from NADH, via FMN and iron-sulfur (Fe-S) centers, to quinones in the respiratory chain. The immediate electron acceptor for the enzyme in this species is believed to be ubiquinone. Couples the redox reaction to proton translocation (for every two electrons transferred, four hydrogen ions are translocated across the cytoplasmic membrane), and thus conserves the redox energy in a proton gradient. This chain is NADH-quinone oxidoreductase subunit C, found in Francisella tularensis subsp. holarctica (strain FTNF002-00 / FTA).